The primary structure comprises 263 residues: MGILVISVDLQCCRCDAKIRKVLGCLEEEYCIEKVEYDVKNNRVIVRGKFDPEKLCKKIWCKAGKIIKEILIVDVWPPPLPPPCKPPPCEKPPEDCKPKPCHCCSCEKPKPKPKPCHCEKPKPCHCEKPKPCEKPPPCKPEEPPKPPPEKPPPKPECKLVPYPYPVPYPYAGQWCCPKPEPPKPPPEPPKEPEPPKPCGCSHAFVCVCKPAPPPPPPCGCSGGHGNCGCGIRPWPPQVWPPPPVCPPPPWCYTEDNANACSIM.

An HMA domain is found at 1–68 (MGILVISVDL…IWCKAGKIIK (68 aa)). Residues cysteine 12 and cysteine 15 each contribute to the a metal cation site. Residues 126–153 (CEKPKPCEKPPPCKPEEPPKPPPEKPPP) are disordered. Over residues 139-153 (KPEEPPKPPPEKPPP) the composition is skewed to basic and acidic residues.

In terms of biological role, involved in defense responses. Contributes to slowing defense responses toward Magnaporthe oryzae. This is Protein PYRICULARIA ORYZAE RESISTANCE 21 from Oryza sativa subsp. indica (Rice).